Here is a 1051-residue protein sequence, read N- to C-terminus: Inactive tyrosine-protein kinase 7 (1051 aa).

Residues 1 to 22 (MAALRALLLLLAVGAQAAIRFA) form the signal peptide. 7 Ig-like C2-type domains span residues 23-105 (KEPY…ANAS), 115-204 (SVVL…DNFT), 213-298 (PQAV…KATL), 308-388 (PFSP…LSIT), 393-472 (PKWV…GSIE), 487-566 (PPPQ…ATVQ), and 573-661 (VTFK…AFLY). At 23–685 (KEPYSQDALH…SHTPYKMIQT (663 aa)) the chain is on the extracellular side. The cysteines at positions 40 and 88 are disulfide-linked. A glycan (N-linked (GlcNAc...) asparagine) is linked at Asn-103. A disulfide bridge connects residues Cys-137 and Cys-187. N-linked (GlcNAc...) asparagine glycans are attached at residues Asn-202, Asn-255, and Asn-264. 5 cysteine pairs are disulfide-bonded: Cys-234/Cys-282, Cys-326/Cys-372, Cys-414/Cys-462, Cys-505/Cys-551, and Cys-594/Cys-645. N-linked (GlcNAc...) asparagine glycans are attached at residues Asn-444, Asn-548, and Asn-627. A helical transmembrane segment spans residues 686-706 (IGLSVGAAVAYIIIVLGLMFY). The Cytoplasmic portion of the chain corresponds to 707–1051 (CKKRRKAKRL…LGDSPADSKA (345 aa)). Positions 777–1048 (LQTITTLGRG…AAALGDSPAD (272 aa)) constitute a Protein kinase; inactive domain.

Belongs to the protein kinase superfamily. Tyr protein kinase family. Insulin receptor subfamily. In terms of tissue distribution, expressed in bone marrow, spleen, bursa, thymus and brain. Weakly expressed in fibroblasts. Also expressed in embryonic liver.

The protein localises to the membrane. Functionally, inactive tyrosine kinase involved in Wnt signaling. pathway. The chain is Inactive tyrosine-protein kinase 7 (PTK7) from Gallus gallus (Chicken).